A 106-amino-acid polypeptide reads, in one-letter code: Ribulose bisphosphate carboxylase small subunit (106 aa).

Belongs to the RuBisCO small chain family. In terms of assembly, heterohexadecamer of 8 large and 8 small subunits.

The protein resides in the plastid. It is found in the cyanelle. Functionally, ruBisCO catalyzes two reactions: the carboxylation of D-ribulose 1,5-bisphosphate, the primary event in carbon dioxide fixation, as well as the oxidative fragmentation of the pentose substrate. Both reactions occur simultaneously and in competition at the same active site. Although the small subunit is not catalytic it is essential for maximal activity. This is Ribulose bisphosphate carboxylase small subunit from Cyanophora paradoxa.